Reading from the N-terminus, the 366-residue chain is ATP-dependent 6-phosphofructokinase 2 (366 aa).

ATP contacts are provided by residues G15, 78–79 (KD), and 119–122 (GDGT). D120 contacts Mg(2+). Residues 142 to 144 (TID), R179, 186 to 188 (MGR), E239, R284, and 290 to 293 (HIQR) contribute to the substrate site. D144 functions as the Proton acceptor in the catalytic mechanism.

Belongs to the phosphofructokinase type A (PFKA) family. Mixed-substrate PFK group III subfamily. In terms of assembly, homodimer or homotetramer. Requires Mg(2+) as cofactor.

Its subcellular location is the cytoplasm. The catalysed reaction is beta-D-fructose 6-phosphate + ATP = beta-D-fructose 1,6-bisphosphate + ADP + H(+). It functions in the pathway carbohydrate degradation; glycolysis; D-glyceraldehyde 3-phosphate and glycerone phosphate from D-glucose: step 3/4. Its activity is regulated as follows. Subject to allosteric activation by ADP and other diphosphonucleosides, and inhibition by phosphoenolpyruvate. Catalyzes the phosphorylation of D-fructose 6-phosphate to fructose 1,6-bisphosphate by ATP, the first committing step of glycolysis. The polypeptide is ATP-dependent 6-phosphofructokinase 2 (Clostridium perfringens (strain 13 / Type A)).